We begin with the raw amino-acid sequence, 455 residues long: Bifunctional protein GlmU (455 aa).

The tract at residues methionine 1–arginine 230 is pyrophosphorylase. UDP-N-acetyl-alpha-D-glucosamine-binding positions include leucine 9–glycine 12, lysine 23, glutamine 73, glycine 78–threonine 79, serine 101–aspartate 103, glycine 140, glutamate 155, asparagine 170, and asparagine 228. Aspartate 103 is a Mg(2+) binding site. A Mg(2+)-binding site is contributed by asparagine 228. Residues valine 231–glutamate 251 are linker. An N-acetyltransferase region spans residues glycine 252–tryptophan 455. UDP-N-acetyl-alpha-D-glucosamine contacts are provided by arginine 333 and lysine 351. Catalysis depends on histidine 363, which acts as the Proton acceptor. UDP-N-acetyl-alpha-D-glucosamine contacts are provided by tyrosine 366 and asparagine 377. Residues asparagine 386–tyrosine 387, serine 405, alanine 423, and arginine 440 contribute to the acetyl-CoA site.

In the N-terminal section; belongs to the N-acetylglucosamine-1-phosphate uridyltransferase family. It in the C-terminal section; belongs to the transferase hexapeptide repeat family. In terms of assembly, homotrimer. Mg(2+) is required as a cofactor.

It localises to the cytoplasm. It carries out the reaction alpha-D-glucosamine 1-phosphate + acetyl-CoA = N-acetyl-alpha-D-glucosamine 1-phosphate + CoA + H(+). It catalyses the reaction N-acetyl-alpha-D-glucosamine 1-phosphate + UTP + H(+) = UDP-N-acetyl-alpha-D-glucosamine + diphosphate. It functions in the pathway nucleotide-sugar biosynthesis; UDP-N-acetyl-alpha-D-glucosamine biosynthesis; N-acetyl-alpha-D-glucosamine 1-phosphate from alpha-D-glucosamine 6-phosphate (route II): step 2/2. The protein operates within nucleotide-sugar biosynthesis; UDP-N-acetyl-alpha-D-glucosamine biosynthesis; UDP-N-acetyl-alpha-D-glucosamine from N-acetyl-alpha-D-glucosamine 1-phosphate: step 1/1. Its pathway is bacterial outer membrane biogenesis; LPS lipid A biosynthesis. Functionally, catalyzes the last two sequential reactions in the de novo biosynthetic pathway for UDP-N-acetylglucosamine (UDP-GlcNAc). The C-terminal domain catalyzes the transfer of acetyl group from acetyl coenzyme A to glucosamine-1-phosphate (GlcN-1-P) to produce N-acetylglucosamine-1-phosphate (GlcNAc-1-P), which is converted into UDP-GlcNAc by the transfer of uridine 5-monophosphate (from uridine 5-triphosphate), a reaction catalyzed by the N-terminal domain. In Limosilactobacillus reuteri (strain DSM 20016) (Lactobacillus reuteri), this protein is Bifunctional protein GlmU.